Consider the following 156-residue polypeptide: Small ribosomal subunit protein uS7 (156 aa).

Belongs to the universal ribosomal protein uS7 family. In terms of assembly, part of the 30S ribosomal subunit. Contacts proteins S9 and S11.

In terms of biological role, one of the primary rRNA binding proteins, it binds directly to 16S rRNA where it nucleates assembly of the head domain of the 30S subunit. Is located at the subunit interface close to the decoding center, probably blocks exit of the E-site tRNA. The protein is Small ribosomal subunit protein uS7 of Geobacter sp. (strain M21).